The primary structure comprises 26 residues: Nicotinic acetylcholine receptor-binding protein Mnn-1A (26 aa).

Residues cysteine 3 and cysteine 22 are joined by a disulfide bond.

Belongs to the three-finger toxin family. Short-chain subfamily. In terms of tissue distribution, expressed by the venom gland.

The protein resides in the secreted. Functionally, binds and may inhibit nicotinic acetylcholine receptors (nAChR). This Micrurus nigrocinctus (Central American coral snake) protein is Nicotinic acetylcholine receptor-binding protein Mnn-1A.